Here is a 387-residue protein sequence, read N- to C-terminus: Odorant receptor 19a (387 aa).

The Cytoplasmic portion of the chain corresponds to 1 to 40 (MDISKVDSTRALVNHWRIFRIMGIHPPGKRTFWGRHYTAY). Residues 41-61 (SMVWNVTFHICIWVSFSVNLL) traverse the membrane as a helical segment. Residues 62–71 (QSNSLETFCE) are Extracellular-facing. Residues 72–92 (SLCVTMPHTLYMLKLINVRRM) form a helical membrane-spanning segment. At 93–127 (RGQMISSHWLLRLLDKRLGCDDERQIIMAGIERAE) the chain is on the cytoplasmic side. Residues 128 to 148 (FIFRTIFRGLACTVVLGIIYI) traverse the membrane as a helical segment. The Extracellular portion of the chain corresponds to 149–171 (SASSEPTLMYPTWIPWNWRDSTS). The helical transmembrane segment at 172–192 (AYLATAMLHTTALMANATLVL) threads the bilayer. Residues 193–254 (NLSSYPGTYL…LRLFKSLERS (62 aa)) are Cytoplasmic-facing. Residues 255–275 (LSMTCFLQFFSTACAQCTICY) form a helical membrane-spanning segment. The Extracellular portion of the chain corresponds to 276–285 (FLLFGNVGIM). The chain crosses the membrane as a helical span at residues 286–306 (RFMNMLFLLVILTTETLLLCY). Topologically, residues 307–336 (TAELPCKEGESLLTAVYSCNWLSQSVNFRR) are cytoplasmic. A helical transmembrane segment spans residues 337-357 (LLLLMLARCQIPMILVSGVIV). Residues 358–387 (PISMKTFTVMIKGAYTMLTLLNEIRKTSLE) lie on the Extracellular side of the membrane.

It belongs to the insect chemoreceptor superfamily. Heteromeric odorant receptor channel (TC 1.A.69) family. Or2a subfamily. As to quaternary structure, interacts with Orco. Complexes exist early in the endomembrane system in olfactory sensory neurons (OSNs), coupling these complexes to the conserved ciliary trafficking pathway. As to expression, expressed in ai2A olfactory sensory neurons in the antenna.

It is found in the cell membrane. Functionally, odorant receptor which mediates acceptance or avoidance behavior, depending on its substrates. The odorant receptor repertoire encodes a large collection of odor stimuli that vary widely in identity, intensity, and duration. May form a complex with Orco to form odorant-sensing units, providing sensitive and prolonged odorant signaling and calcium permeability. Involved in the preference for citrus fruits for oviposition, especially through the response to valencene, the primary ligand of Or19a. Larvae growing on citrus fruits suffer a reduced risk of parasitism since endoparasitoid wasps that parasitize larvae are strongly repelled by the smell of citrus, as well as by valencene. In Drosophila melanogaster (Fruit fly), this protein is Odorant receptor 19a (Or19a).